Here is a 176-residue protein sequence, read N- to C-terminus: MITVEADISDLWPEQSNWEALAQTACQQAVSVSASDFLLAKDYETEISVCFSDNDTVHALNKTWRDKDRPTNVLSFPMMEAEELAEIKNRVGSECLLGDIILAFDVAKKEALEKGISLENHVTHLITHGTLHLLGYDHILDNEAEIMEDLERKALAQLDIPDPYSDHETGKEGLDG.

Positions 128, 132, and 138 each coordinate Zn(2+).

The protein belongs to the endoribonuclease YbeY family. It depends on Zn(2+) as a cofactor.

The protein localises to the cytoplasm. Its function is as follows. Single strand-specific metallo-endoribonuclease involved in late-stage 70S ribosome quality control and in maturation of the 3' terminus of the 16S rRNA. This is Endoribonuclease YbeY from Zymomonas mobilis subsp. mobilis (strain ATCC 31821 / ZM4 / CP4).